The sequence spans 788 residues: Histidine--tRNA ligase, cytoplasmic (788 aa).

Residues 252 to 286 (PQACEENEAGSSTENPHASGEKPKGDKKSKKKKTL) are disordered.

It belongs to the class-II aminoacyl-tRNA synthetase family. In terms of assembly, homodimer.

It catalyses the reaction tRNA(His) + L-histidine + ATP = L-histidyl-tRNA(His) + AMP + diphosphate + H(+). The chain is Histidine--tRNA ligase, cytoplasmic from Oryza sativa subsp. japonica (Rice).